Consider the following 217-residue polypeptide: Small ribosomal subunit protein uS3c (217 aa).

A KH type-2 domain is found at 47-119 (VRTHIKSSSN…KLHIAIEKVA (73 aa)).

The protein belongs to the universal ribosomal protein uS3 family. As to quaternary structure, part of the 30S ribosomal subunit.

It localises to the plastid. The protein localises to the chloroplast. The sequence is that of Small ribosomal subunit protein uS3c (rps3) from Pinus thunbergii (Japanese black pine).